Consider the following 582-residue polypeptide: DNA mismatch repair protein MutL (582 aa).

This sequence belongs to the DNA mismatch repair MutL/HexB family.

This protein is involved in the repair of mismatches in DNA. It is required for dam-dependent methyl-directed DNA mismatch repair. May act as a 'molecular matchmaker', a protein that promotes the formation of a stable complex between two or more DNA-binding proteins in an ATP-dependent manner without itself being part of a final effector complex. The protein is DNA mismatch repair protein MutL of Chlamydia abortus (strain DSM 27085 / S26/3) (Chlamydophila abortus).